Reading from the N-terminus, the 119-residue chain is Large ribosomal subunit protein bL20 (119 aa).

This sequence belongs to the bacterial ribosomal protein bL20 family.

Functionally, binds directly to 23S ribosomal RNA and is necessary for the in vitro assembly process of the 50S ribosomal subunit. It is not involved in the protein synthesizing functions of that subunit. The sequence is that of Large ribosomal subunit protein bL20 from Caldanaerobacter subterraneus subsp. tengcongensis (strain DSM 15242 / JCM 11007 / NBRC 100824 / MB4) (Thermoanaerobacter tengcongensis).